Reading from the N-terminus, the 121-residue chain is Small ribosomal subunit protein uS13 (121 aa).

Residues 91–121 are disordered; the sequence is HRMSLPVRGQRTRTNARTRRGSRKTVAGRKK. A compositionally biased stretch (basic residues) spans 100-121; it reads QRTRTNARTRRGSRKTVAGRKK.

This sequence belongs to the universal ribosomal protein uS13 family. As to quaternary structure, part of the 30S ribosomal subunit. Forms a loose heterodimer with protein S19. Forms two bridges to the 50S subunit in the 70S ribosome.

Located at the top of the head of the 30S subunit, it contacts several helices of the 16S rRNA. In the 70S ribosome it contacts the 23S rRNA (bridge B1a) and protein L5 of the 50S subunit (bridge B1b), connecting the 2 subunits; these bridges are implicated in subunit movement. Contacts the tRNAs in the A and P-sites. The protein is Small ribosomal subunit protein uS13 of Prochlorococcus marinus (strain MIT 9515).